The primary structure comprises 252 residues: Putative endonuclease C1F12.06c (252 aa).

D43 and D114 together coordinate Mg(2+).

The protein belongs to the endonuclease V family.

The protein resides in the cytoplasm. The protein localises to the nucleus. The polypeptide is Putative endonuclease C1F12.06c (Schizosaccharomyces pombe (strain 972 / ATCC 24843) (Fission yeast)).